The primary structure comprises 261 residues: uncharacterized protein (261 aa).

The region spanning 1–236 (MEIKEITIIG…SRKINEVDNW (236 aa)) is the ABC transporter domain. 36–43 (GPTGSGKS) lines the ATP pocket.

This sequence belongs to the ABC transporter superfamily.

This is an uncharacterized protein from Methanocaldococcus jannaschii (strain ATCC 43067 / DSM 2661 / JAL-1 / JCM 10045 / NBRC 100440) (Methanococcus jannaschii).